The chain runs to 311 residues: Immune-associated nucleotide-binding protein 7 (311 aa).

The region spanning 14–222 (KQAENIVLVG…YTDDTYHMIK (209 aa)) is the AIG1-type G domain. The interval 23 to 30 (GRTGNGKS) is G1. Residues 23–31 (GRTGNGKSA) and serine 44 contribute to the GTP site. The interval 50 to 54 (GVTMK) is G2. The interval 72–75 (DTPG) is G3. The tract at residues 142 to 145 (TGGD) is G4. Residues 181 to 183 (DNK) form a G5 region. Asparagine 182 is a binding site for GTP. Positions 218-295 (YHMIKEESEK…TQENNELNLA (78 aa)) form a coiled coil.

It belongs to the TRAFAC class TrmE-Era-EngA-EngB-Septin-like GTPase superfamily. AIG1/Toc34/Toc159-like paraseptin GTPase family. IAN subfamily. Ubiquitous.

This chain is Immune-associated nucleotide-binding protein 7, found in Arabidopsis thaliana (Mouse-ear cress).